An 874-amino-acid chain; its full sequence is Protein Son (874 aa).

3 disordered regions span residues 1-45 (MTEN…ERPD), 68-98 (RRSN…NIKP), and 120-368 (ELLD…SRDL). The span at 12–24 (ETPQVAGSQTNPP) shows a compositional bias: polar residues. A compositionally biased stretch (low complexity) spans 70–89 (SNSNELGNNDESGESESSAS). Basic residues-rich tracts occupy residues 128 to 147 (KKKK…KKKT) and 162 to 175 (KHKH…HKDI). Composition is skewed to basic and acidic residues over residues 176–219 (RVKD…KDKF) and 226–277 (SEKE…ERVR). One can recognise a G-patch domain in the interval 705 to 751 (TGGMGMALLQKMGWKPGEGLGRCKTGSLQPLLLDVKLDKRGLVSRDD). The 71-residue stretch at 800–870 (HPVCVLNELT…AALCLRSLGI (71 aa)) folds into the DRBM domain.

In terms of tissue distribution, expressed in ovarian nurse cells (at protein level).

It localises to the nucleus. RNA-binding protein that protects nascent transcripts containing intronic transposable sequences, known as INE-1, from being degraded by DIP1. Modulates DIP1 activity by repressing its sumoylation levels. This ensures that intronic sequences will be degradated only after splicing. In the ovaries, regulates germline stem cells (GSCs) self-renewal by repressing the expression of the GSC differentiation-promoting factor Rga. The chain is Protein Son from Drosophila melanogaster (Fruit fly).